The following is a 334-amino-acid chain: Glycerol-3-phosphate dehydrogenase [NAD(P)+] (334 aa).

NADPH contacts are provided by W13, R33, and K106. Sn-glycerol 3-phosphate contacts are provided by K106, G137, and S139. NADPH is bound at residue A141. 5 residues coordinate sn-glycerol 3-phosphate: K192, D245, S255, R256, and N257. K192 acts as the Proton acceptor in catalysis. Position 256 (R256) interacts with NADPH. V280 and E282 together coordinate NADPH.

It belongs to the NAD-dependent glycerol-3-phosphate dehydrogenase family.

It localises to the cytoplasm. It catalyses the reaction sn-glycerol 3-phosphate + NAD(+) = dihydroxyacetone phosphate + NADH + H(+). The enzyme catalyses sn-glycerol 3-phosphate + NADP(+) = dihydroxyacetone phosphate + NADPH + H(+). Its pathway is membrane lipid metabolism; glycerophospholipid metabolism. Its function is as follows. Catalyzes the reduction of the glycolytic intermediate dihydroxyacetone phosphate (DHAP) to sn-glycerol 3-phosphate (G3P), the key precursor for phospholipid synthesis. The chain is Glycerol-3-phosphate dehydrogenase [NAD(P)+] from Chlamydia caviae (strain ATCC VR-813 / DSM 19441 / 03DC25 / GPIC) (Chlamydophila caviae).